Reading from the N-terminus, the 886-residue chain is Alanine--tRNA ligase (886 aa).

H564, H568, C666, and H670 together coordinate Zn(2+).

Belongs to the class-II aminoacyl-tRNA synthetase family. Zn(2+) is required as a cofactor.

It is found in the cytoplasm. It carries out the reaction tRNA(Ala) + L-alanine + ATP = L-alanyl-tRNA(Ala) + AMP + diphosphate. Catalyzes the attachment of alanine to tRNA(Ala) in a two-step reaction: alanine is first activated by ATP to form Ala-AMP and then transferred to the acceptor end of tRNA(Ala). Also edits incorrectly charged Ser-tRNA(Ala) and Gly-tRNA(Ala) via its editing domain. This is Alanine--tRNA ligase from Prochlorococcus marinus (strain AS9601).